A 56-amino-acid polypeptide reads, in one-letter code: Large ribosomal subunit protein bL33 (56 aa).

Belongs to the bacterial ribosomal protein bL33 family.

The chain is Large ribosomal subunit protein bL33 from Vibrio vulnificus (strain YJ016).